The sequence spans 645 residues: Protein disulfide-isomerase A4 (645 aa).

Residues 1–20 (MRPRKAFLLLLLLGLVQLLA) form the signal peptide. Thioredoxin domains are found at residues 21–169 (VAGA…EVSQ) and 158–301 (EEIV…EFLK). Positions 24 to 58 (AEGPDEDSSNRENAIEDEEEEEEEDDDEEEDDLEV) are disordered. Over residues 38 to 58 (IEDEEEEEEEDDDEEEDDLEV) the composition is skewed to acidic residues. Residues 91 to 94 (CGHC) carry the CXXC motif. 2 disulfide bridges follow: C91–C94 and C206–C209. Position 366 is an N6-acetyllysine (K366). Residues 505–636 (FKKGKLKPVI…LSKFIEEHAT (132 aa)) form the Thioredoxin 3 domain. A CXXC motif is present at residues 555–558 (CGHC). A disulfide bridge connects residues C555 and C558. The Prevents secretion from ER motif lies at 642 to 645 (KEEL).

The protein belongs to the protein disulfide isomerase family. As to quaternary structure, part of a large chaperone multiprotein complex comprising DNAJB11, HSP90B1, HSPA5, HYOU, PDIA2, PDIA4, PDIA6, PPIB, SDF2L1, UGGT1 and very small amounts of ERP29, but not, or at very low levels, CALR nor CANX. Component of a complex containing at least CRELD2, MANF, MATN3 and PDIA4. (Microbial infection) Interacts with Human astrovirus-1 and Human astrovirus-8 spike protein VP25; this interaction seems to facilitate the uncoating during virus entry into the cell. Does not interact with Human astrovirus-2 spike protein VP25.

Its subcellular location is the endoplasmic reticulum lumen. The protein resides in the melanosome. It catalyses the reaction Catalyzes the rearrangement of -S-S- bonds in proteins.. The chain is Protein disulfide-isomerase A4 (PDIA4) from Homo sapiens (Human).